A 727-amino-acid polypeptide reads, in one-letter code: DNA topoisomerase 3 (727 aa).

The region spanning 3-136 is the Toprim domain; it reads KTVVLAEKPS…IKRLWISSVT (134 aa). Mg(2+) is bound by residues E9 and D105. The region spanning 153 to 593 is the Topo IA-type catalytic domain; sequence YENLYHSAVA…DMKAYAHQTV (441 aa). The interval 187-192 is interaction with DNA; sequence SCGRVQ. Y310 (O-(5'-phospho-DNA)-tyrosine intermediate) is an active-site residue. Residues 685-699 show a composition bias toward basic and acidic residues; the sequence is KRKNKDKARATKRDV. The segment at 685–714 is disordered; sequence KRKNKDKARATKRDVSSYMKKQNKDEPINN.

The protein belongs to the type IA topoisomerase family. It depends on Mg(2+) as a cofactor.

The enzyme catalyses ATP-independent breakage of single-stranded DNA, followed by passage and rejoining.. In terms of biological role, releases the supercoiling and torsional tension of DNA, which is introduced during the DNA replication and transcription, by transiently cleaving and rejoining one strand of the DNA duplex. Introduces a single-strand break via transesterification at a target site in duplex DNA. The scissile phosphodiester is attacked by the catalytic tyrosine of the enzyme, resulting in the formation of a DNA-(5'-phosphotyrosyl)-enzyme intermediate and the expulsion of a 3'-OH DNA strand. The free DNA strand then undergoes passage around the unbroken strand, thus removing DNA supercoils. Finally, in the religation step, the DNA 3'-OH attacks the covalent intermediate to expel the active-site tyrosine and restore the DNA phosphodiester backbone. The chain is DNA topoisomerase 3 from Bacillus subtilis (strain 168).